A 1112-amino-acid polypeptide reads, in one-letter code: MDEIHGEVSPPAINRSNGALVSDNISQVVEGVDNVERPAKVAKGYSAANRPPPELPHITNNVIPLSNVLKFYTQEAFKQITTLVENLASTKDSEDDSVRKKKFLELIIALRQDFIKIYTLVKWAANSKDVSRFIDLLNWLRMQEFYFDQLTFQLNALNGYSGAKLPNSDLITSLEVLFKGRPQLPSYNYIKIPKISPEKTLEVMQDLNLILMTRIALIDIPKRFINNYVIKDGRIYFSVPNEFQVSITVANDMIIESHDEYTKSPFYFIDFKFLFGINPDTSLITHRDNKIVTKLPRSSHENLEKIVNATLLNQGLHGLYDLLHKFSISFKLYLIAKQLKELQINTRWRNNLQVNYQNGKSLIILNYWSGQYLSKGWKSFIELGIDRNYNLNFRWFKNGKYNVNTELSALFNKHLKNTNEGEEEKDDSTDDIEEPEDLNVDLILNIVVNKHSELLMSKVFNSLDAKLNTTDNPDQISYITPHQLLIKSSPTKSTIFCINPLTGLFYFIDPCPVQNLIAKKINSPPTVVKNKNFVAESDMVNTIVDGLTQLRLEIFNKEIHNRLLTTEWINNDIIGLNDYEISRLSNFFANSLDYNLNVNKIQFYRRKNWPSSWFLINLVSGVTSVTFWWVARIKSVSGEWKIQWIQKLHLNEKTPSVEITDDPTNLNFEFFNNLSTACSNMIIDHMLLEELFKRNIKFLKVDNTALILQKFNIDKIPDDEDTQDTDDKNKPLIYESIIMIYNDNNLLPVYNSATSLFLKIKLINLNNLTQMKLKLFGKLRNLSIRNSPENFLQLNLKIDEIKNFFEIDDLINLSSRTNGSDSASSATTNHLLDKIFNNLNKLNKLIKILDQLNKNKIQIINNSVNDIIIKIDDNLDNLIIKLPEKATDSIKLISEEEVKDGGNPEVKLILDYLNKYLSNYYSDDFFANDEDKFYDGNKKTSIVGIIKYLKEINPILKSVQTIKAKLRKPESAFKLSNGLSKLNFDIKFTTLNLIQYVFHMNYQTPSSSKKIFKDKIVISLSFKNNKFDKVSKNLIKISLKDNLNSKNLKYKKLFELIFKSINDGSMDAHAHQLIKLNYDFLVNSSLVGELMVRIANCFVLYLQAESNGRYNQ.

The protein belongs to the Mediator complex subunit 14 family. In terms of assembly, component of the Mediator complex.

The protein resides in the nucleus. In terms of biological role, component of the Mediator complex, a coactivator involved in the regulated transcription of nearly all RNA polymerase II-dependent genes. Mediator functions as a bridge to convey information from gene-specific regulatory proteins to the basal RNA polymerase II transcription machinery. Mediator is recruited to promoters by direct interactions with regulatory proteins and serves as a scaffold for the assembly of a functional preinitiation complex with RNA polymerase II and the general transcription factors. This Scheffersomyces stipitis (strain ATCC 58785 / CBS 6054 / NBRC 10063 / NRRL Y-11545) (Yeast) protein is Mediator of RNA polymerase II transcription subunit 14 (RGR1).